Consider the following 599-residue polypeptide: MSMRSEYCGLVTEHLLGQTVSLCGWVSRRRDHGGVIFIDLRDREGLVQVVCDPDRAEMFKTAEGVRNEFCVQVKGVVRNRPEGTTNAGLKSGKIEVLCHELNVLNASVTPPFQLDDDNLSETTRLTHRVLDLRRPQMQHNLRLRYRVAMEVRKYLDSRGFIDIETPMLTKSTPEGARDYLVPSRVNAGQFFALPQSPQLFKQLLMVANFDRYYQITKCFRDEDLRADRQPEFTQIDCETSFLSEQEIRDLFEDMTRHVFKETIGVELDAKFAVMPYSEAMSRFGSDKPDLRVKLEFTELTDAMKDVDFKVFSTPANTKDGRVAALRVPKGGELSRGDIDSYTEFVRIYGAKGLAWIKINEVAKGRDGLQSPIVKNLHDAAIAAIIERTGAQDGDIIFFAADRAKVVNDSLGALRLKIGHSEFGKANGLVEAGWKPLWVVDFPMFEYDEEENRYVAAHHPFTSPKDEHLEYLETDPGRCLAKAYDIVLNGWEIGGGSVRIFQEDVQSKVFRALKIGAEEARLKFGFLLDALQYGAPPHGGIAFGLDRIVTMMAGADSIRDVIAFPKTQRAQDLLTQAPSEVDERQLRELHIRLRQPEQKA.

L-aspartate is bound at residue Glu174. Residues 198-201 (QLFK) are aspartate. Arg220 lines the L-aspartate pocket. Residues 220-222 (RDE) and Gln229 contribute to the ATP site. His457 lines the L-aspartate pocket. Glu491 provides a ligand contact to ATP. Position 498 (Arg498) interacts with L-aspartate. 543-546 (GLDR) contributes to the ATP binding site.

The protein belongs to the class-II aminoacyl-tRNA synthetase family. Type 1 subfamily. In terms of assembly, homodimer.

It localises to the cytoplasm. The enzyme catalyses tRNA(Asx) + L-aspartate + ATP = L-aspartyl-tRNA(Asx) + AMP + diphosphate. Functionally, aspartyl-tRNA synthetase with relaxed tRNA specificity since it is able to aspartylate not only its cognate tRNA(Asp) but also tRNA(Asn). Reaction proceeds in two steps: L-aspartate is first activated by ATP to form Asp-AMP and then transferred to the acceptor end of tRNA(Asp/Asn). The protein is Aspartate--tRNA(Asp/Asn) ligase of Paraburkholderia phymatum (strain DSM 17167 / CIP 108236 / LMG 21445 / STM815) (Burkholderia phymatum).